The following is a 622-amino-acid chain: uncharacterized protein (622 aa).

The N-terminal stretch at 1-20 is a signal peptide; the sequence is MKIKAVAIFLSLLMIISLFS.

This is an uncharacterized protein from Methanocaldococcus jannaschii (strain ATCC 43067 / DSM 2661 / JAL-1 / JCM 10045 / NBRC 100440) (Methanococcus jannaschii).